The chain runs to 583 residues: Ribosomal lysine N-methyltransferase 1 (583 aa).

An SET domain is found at 22–274 (EELKFLYTDL…QSRELSNNYG (253 aa)). Residue Tyr273 coordinates S-adenosyl-L-methionine. Coiled-coil stretches lie at residues 378 to 407 (KAEE…KLNS) and 433 to 459 (KGQK…ENKH).

It belongs to the class V-like SAM-binding methyltransferase superfamily. RKM1 family.

The protein localises to the cytoplasm. Its subcellular location is the nucleus. Its function is as follows. S-adenosyl-L-methionine-dependent protein-lysine N-methyltransferase that monomethylates ribosomal protein S18 (RPS18A and RPS18B) at 'Lys-48' and dimethylates ribosomal protein L23 (RPL23A and RPL23B) at 'Lys-106' and 'Lys-110'. The protein is Ribosomal lysine N-methyltransferase 1 of Saccharomyces cerevisiae (strain ATCC 204508 / S288c) (Baker's yeast).